The following is a 225-amino-acid chain: MEPIKNMPRLCRTLGYEFNDQSLLEHALTHRSASSKHNERLEFLGDSILSIIISDALFHQFPKATEGDLSRMRATLVCGKMLAEIGFEFKLGDYLNLGPGELKSGGFRRESIIADAVEAIIGAVYIDSGVEKCRCLVLSWYESRLAIIQPVNQKDPKTLLQELLQGFKKPLPVYKVIDIKGEAHAQTFTVECYVEELSKPVIGIASSRRKAEQLAAADALELMKR.

Positions M7–G129 constitute an RNase III domain. Residue E42 participates in Mg(2+) binding. The active site involves D46. Residues D115 and E118 each contribute to the Mg(2+) site. E118 is a catalytic residue. Residues D155–R225 enclose the DRBM domain.

It belongs to the ribonuclease III family. In terms of assembly, homodimer. Mg(2+) serves as cofactor.

It is found in the cytoplasm. The catalysed reaction is Endonucleolytic cleavage to 5'-phosphomonoester.. In terms of biological role, digests double-stranded RNA. Involved in the processing of primary rRNA transcript to yield the immediate precursors to the large and small rRNAs (23S and 16S). Processes some mRNAs, and tRNAs when they are encoded in the rRNA operon. Processes pre-crRNA and tracrRNA of type II CRISPR loci if present in the organism. This chain is Ribonuclease 3, found in Shewanella sediminis (strain HAW-EB3).